The following is a 697-amino-acid chain: Elongation factor G 2 (697 aa).

The tr-type G domain maps to 6–281 (TNYRNFGIFA…AVVDFLPNPT (276 aa)). GTP contacts are provided by residues 15–22 (AHVDAGKT), 79–83 (DTPGH), and 133–136 (NKLD).

This sequence belongs to the TRAFAC class translation factor GTPase superfamily. Classic translation factor GTPase family. EF-G/EF-2 subfamily.

It localises to the cytoplasm. Functionally, catalyzes the GTP-dependent ribosomal translocation step during translation elongation. During this step, the ribosome changes from the pre-translocational (PRE) to the post-translocational (POST) state as the newly formed A-site-bound peptidyl-tRNA and P-site-bound deacylated tRNA move to the P and E sites, respectively. Catalyzes the coordinated movement of the two tRNA molecules, the mRNA and conformational changes in the ribosome. The sequence is that of Elongation factor G 2 from Trichodesmium erythraeum (strain IMS101).